The primary structure comprises 303 residues: Coenzyme PQQ synthesis protein B (303 aa).

This sequence belongs to the PqqB family.

It participates in cofactor biosynthesis; pyrroloquinoline quinone biosynthesis. Functionally, may be involved in the transport of PQQ or its precursor to the periplasm. The protein is Coenzyme PQQ synthesis protein B of Pseudomonas syringae pv. syringae (strain B728a).